The sequence spans 913 residues: Calcium-activated chloride channel regulator 1 (913 aa).

The first 21 residues, 1 to 21 (MESLKSPVFLLILHLLEGVLS), serve as a signal peptide directing secretion. The metalloprotease domain stretch occupies residues 46–199 (DEALIQHIKD…AITGKNQVRR (154 aa)). His156 contributes to the Zn(2+) binding site. The active site involves Glu157. Zn(2+) contacts are provided by His160 and Asn167. In terms of domain architecture, VWFA spans 307–476 (IVCLVLDKSG…NGLVDAFAAL (170 aa)). Residues Asn504, Asn770, Asn804, Asn810, Asn836, and Asn887 are each glycosylated (N-linked (GlcNAc...) asparagine).

Belongs to the CLCR family. In terms of processing, the 110 kDa translation product is autoproteolytically cleaved by the metalloprotease domain in the endoplasmic reticulum into a 75 kDa N-terminal and a 35 kDa C-terminal products that remain physically associated with each other. The cleavage is necessary for calcium-activated chloride channel (CaCC) activation activity. Glycosylated. In terms of tissue distribution, exclusively expressed in the digestive and respiratory tracts and in the uterus (at protein level). Expressed in small intestine, colon, stomach, and uterus and slightly expressed in trachea tissue. Exclusively expressed in the mucin granule membranes of gastrointestinal, respiratory, and uterine goblet cells and other mucin-producing cells. In the colon, expressed in the surface mucous cells. In the stomach highly expressed in the surface epithelium in the pylorus. Strongly expressed in the airway epithelium of lung tissues associated with airway hyperresponsiveness (AHR).

It is found in the secreted. The protein localises to the extracellular space. Its function is as follows. May be involved in mediating calcium-activated chloride conductance. May play critical roles in goblet cell metaplasia, mucus hypersecretion, cystic fibrosis and AHR. May be involved in the regulation of mucus production and/or secretion by goblet cells. Involved in the regulation of tissue inflammation in the innate immune response. May play a role as a tumor suppressor. Induces MUC5AC. The sequence is that of Calcium-activated chloride channel regulator 1 (Clca1) from Mus musculus (Mouse).